Consider the following 1024-residue polypeptide: MKFLSLFIYRPVATSLLTLALVLSGLLGFRMLPVASLPQMDFPVIVVSASLPGASPETMASSVATPLERALGRIAGVSEMTSSSSLGSTEVVLMFDFDRDINGAARDVQGAINAAQSLLPSGMPRRPSYRKVNPSDAPIMIMTLSSDTFSPGQLYDYASTQLAQRLSQIDGVGDVTIGGSSLPAVRVDLNPQALFNQGVSLDAVRTTIANANVRRPQGAIDDRQQRWWLKTNDELHTAAEYRPLVIRYHQGAAVRLQDVATVTDSVENVRNAGMSNARPAVLVVIRKSPQANVIDTIDRIRDEVPQLRKTIPAAIQLEIAQDSSATIRASLHEVEQSLAVSVGLVVLVVFAFLRSGRATLIPAVAVPVSLIGTFAAMYLCGFSLNNLSLMALTVASGFVVDDAIVVLENISRHVEAGLKPLQAALLGGREVGFTVVSMSVSLIAVFIPLLMQGGIIGRFFREFAITLSVSIAISLVISLTLTPVMCARLLRSSAPRQQPRRRGFGRMLLVVQQGYGRALHRVLDHARWALLVFVASLGLTVYLFISMPKTFMPEQDTGRLMGFIQADQSTSFQAMRSKVEHFMRVVHADPAVESVVGFTGGWETNSGAMFIALKPLSTRGDNAQQVIARLRSKLAKEAGATLWLRAVQDIRIGARQSDGGYQYSLLSDSLDDLRQWQPKIRRAFASLPELVDVNSDQQDKGAEMALTYDRTRMARLGIDVADVNGLLNNAFGQRQISTIYQPLNQYQVVMGVDARYAQDINALNQMYVTNHQGQPIPLSSFASWQPANAPLSVEHEGLSAVSTLSFNLPEGVSLSQAAAAIDRSVIALGMPSSVRGSFSGTAAVFEQTQSSQLWLILAAIATVYIVLGMLYESYVHPLTILSTLPSAGMGALLALKLFNTPFSLIALIGILLLIGIVKKNAIMMVDFALQAQRQDGMPVREAIFQASLLRFRPIIMTTLAAMLGALPLVLSSGDGAELRQPLGITIVGGLVVSQLLTLFTTPVVYLYMDKLRRKPRWRPVPAQS.

The next 12 membrane-spanning stretches (helical) occupy residues 3–23 (FLSL…ALVL), 333–353 (EVEQ…FAFL), 360–380 (LIPA…MYLC), 387–407 (LSLM…IVVL), 431–451 (VGFT…PLLM), 463–483 (FAIT…TLTP), 528–548 (WALL…ISMP), 853–873 (LWLI…LYES), 875–895 (VHPL…LLAL), 897–917 (LFNT…IGIV), 953–973 (PIIM…LSSG), and 984–1004 (ITIV…TPVV).

This sequence belongs to the resistance-nodulation-cell division (RND) (TC 2.A.6) family. MdtC subfamily. As to quaternary structure, part of a tripartite efflux system composed of MdtA, MdtB and MdtC. MdtC forms a heteromultimer with MdtB.

It is found in the cell inner membrane. The sequence is that of Multidrug resistance protein MdtC from Erwinia amylovora (strain ATCC 49946 / CCPPB 0273 / Ea273 / 27-3).